Here is a 157-residue protein sequence, read N- to C-terminus: MSLKVAFLNENARAPTRGSVHAAGYDLYAAEEKTIPANGRGLVDLGLSMSIPEGTYARIAPRSGLAVKNGLSTGAGVIDYDYRGPVKVMLFNHSTEDFNVTIGDRVAQMILERIVTPEVQVVQTNDLESTERGAGGFGSTGINDEKKRKLDEAEAKE.

8 residues coordinate dUMP: Ser-63, Gly-76, Asp-79, Tyr-82, Lys-87, Arg-132, Phe-137, and Gly-138. The interval Asn-125–Glu-157 is disordered. Residues Asn-143–Glu-157 show a composition bias toward basic and acidic residues.

The protein belongs to the dUTPase family. Homotrimer. Requires Mg(2+) as cofactor.

The catalysed reaction is dUTP + H2O = dUMP + diphosphate + H(+). Its pathway is pyrimidine metabolism; dUMP biosynthesis; dUMP from dCTP (dUTP route): step 2/2. Involved in nucleotide metabolism via production of dUMP, the immediate precursor of thymidine nucleotides, and decreases the intracellular concentration of dUTP so that uracil cannot be incorporated into DNA. The protein is Deoxyuridine 5'-triphosphate nucleotidohydrolase (DUT1) of Yarrowia lipolytica (strain CLIB 122 / E 150) (Yeast).